A 355-amino-acid chain; its full sequence is Uroporphyrinogen decarboxylase (355 aa).

Residues 27-31 (RQAGR), Asp-77, Tyr-154, Thr-209, and His-328 each bind substrate.

Belongs to the uroporphyrinogen decarboxylase family. In terms of assembly, homodimer.

It is found in the cytoplasm. It catalyses the reaction uroporphyrinogen III + 4 H(+) = coproporphyrinogen III + 4 CO2. It functions in the pathway porphyrin-containing compound metabolism; protoporphyrin-IX biosynthesis; coproporphyrinogen-III from 5-aminolevulinate: step 4/4. Functionally, catalyzes the decarboxylation of four acetate groups of uroporphyrinogen-III to yield coproporphyrinogen-III. This chain is Uroporphyrinogen decarboxylase, found in Dechloromonas aromatica (strain RCB).